A 224-amino-acid polypeptide reads, in one-letter code: uncharacterized protein (224 aa).

The first 17 residues, 1–17 (MFTILLYFLVLFWVTNA), serve as a signal peptide directing secretion.

This is an uncharacterized protein from Caenorhabditis elegans.